The sequence spans 723 residues: Preterminal protein (723 aa).

Positions 453-462 match the Nuclear localization signal motif; sequence RLPMRRRRRR. The disordered stretch occupies residues 457-492; the sequence is RRRRRRAPPPPPMSEELSEPEVEAFPPASPPRRSFE. Ser651 is modified (O-(5'-phospho-DNA)-serine).

Belongs to the adenoviridae terminal protein family. Heterodimer with the polymerase; this heterodimer binds to bp 9 to 18 of the genome. Interacts with host POU2F1; POU2F1 binds to the auxiliary sequences in the inverted terminal repeats and tethers the pTP-POL heterodimer to the origin DNA thereby participating in the assembly of the pre-initiation complex (POL-TP-DBP-NFIA-POU2F1). Preterminal protein is used to replicate viral genome, upon genomic encapsidation it is processed first into iTP and finally into TP by adenovirus protease.

The protein localises to the host nucleus matrix. Protein covalently bound to the viral DNA that acts as a primer for viral genomic replication by DNA strand displacement. Assembles on the viral origin of replication in an initiation complex with viral polymerase, DBP, host NFIA and host POU2F1/OCT1. During initiation, the polymerase covalently couples the first dCTP with Ser-580 of pTP. The terminal protein stimulates the template activity over 20 fold compared to protein-free templates. Neo-synthesized viral genomes are linked to two preterminal proteins, one for each 5' end. These new genomes are encapsidated in the nucleus, and during capsid maturation by viral protease, preterminal protein is first cleaved into intermediary (iTP), then into mature TP. May play a role in host nuclear matrix localization of genomic DNA. The protein is Preterminal protein of Canis lupus familiaris (Dog).